The primary structure comprises 548 residues: Chaperonin GroEL (548 aa).

Residues 30-33, Lys-51, 87-91, Gly-415, 479-481, and Asp-495 contribute to the ATP site; these read TLGP, DGTTT, and NAA.

The protein belongs to the chaperonin (HSP60) family. In terms of assembly, forms a cylinder of 14 subunits composed of two heptameric rings stacked back-to-back. Interacts with the co-chaperonin GroES.

The protein localises to the cytoplasm. The catalysed reaction is ATP + H2O + a folded polypeptide = ADP + phosphate + an unfolded polypeptide.. Functionally, together with its co-chaperonin GroES, plays an essential role in assisting protein folding. The GroEL-GroES system forms a nano-cage that allows encapsulation of the non-native substrate proteins and provides a physical environment optimized to promote and accelerate protein folding. The protein is Chaperonin GroEL of Oleidesulfovibrio alaskensis (strain ATCC BAA-1058 / DSM 17464 / G20) (Desulfovibrio alaskensis).